We begin with the raw amino-acid sequence, 435 residues long: Adenylosuccinate synthetase (435 aa).

Residues 11-17 (GDEGKGK) and 39-41 (GHT) each bind GTP. The active-site Proton acceptor is Asp-12. Mg(2+) is bound by residues Asp-12 and Gly-39. Residues 12-15 (DEGK), 37-40 (NAGH), Thr-128, Arg-142, Gln-223, Thr-238, and Arg-302 contribute to the IMP site. The active-site Proton donor is the His-40. Position 298-304 (298-304 (SVTGRPR)) interacts with substrate. GTP-binding positions include Arg-304, 330-332 (KLD), and 412-414 (STG).

It belongs to the adenylosuccinate synthetase family. As to quaternary structure, homodimer. It depends on Mg(2+) as a cofactor.

It is found in the cytoplasm. The enzyme catalyses IMP + L-aspartate + GTP = N(6)-(1,2-dicarboxyethyl)-AMP + GDP + phosphate + 2 H(+). Its pathway is purine metabolism; AMP biosynthesis via de novo pathway; AMP from IMP: step 1/2. Functionally, plays an important role in the de novo pathway of purine nucleotide biosynthesis. Catalyzes the first committed step in the biosynthesis of AMP from IMP. The polypeptide is Adenylosuccinate synthetase (Coxiella burnetii (strain RSA 331 / Henzerling II)).